Reading from the N-terminus, the 875-residue chain is Neurotrypsin (875 aa).

The signal sequence occupies residues 1–20 (MTLARFVLALMLGALPEVVG). A glycan (N-linked (GlcNAc...) asparagine) is linked at Asn-26. A disordered region spans residues 29–88 (LHHSHRHSPPPGPHYPYYLPTQQRPPRTRPPPPLPRFPRPPRALPAQRPHALQAGHTPRP). The span at 43 to 53 (YPYYLPTQQRP) shows a compositional bias: low complexity. The span at 56 to 71 (TRPPPPLPRFPRPPRA) shows a compositional bias: pro residues. The 73-residue stretch at 93–165 (CPAGEPWVSV…GKVDWGYCDC (73 aa)) folds into the Kringle domain. Intrachain disulfides connect Cys-93-Cys-165, Cys-109-Cys-149, Cys-138-Cys-163, Cys-195-Cys-259, Cys-208-Cys-269, Cys-239-Cys-249, Cys-305-Cys-369, Cys-318-Cys-379, Cys-349-Cys-359, Cys-412-Cys-475, Cys-425-Cys-485, Cys-455-Cys-465, Cys-525-Cys-589, Cys-538-Cys-599, Cys-569-Cys-579, Cys-619-Cys-750, Cys-661-Cys-677, Cys-765-Cys-831, Cys-794-Cys-808, and Cys-821-Cys-850. SRCR domains are found at residues 170–271 (VRLR…TCSF), 280–381 (IRLA…SCTP), 387–487 (IRLA…ACYP), and 500–601 (VRLV…ICDY). A zymogen activation region region spans residues 619–630 (CGLRLLHRRQKR). A Peptidase S1 domain is found at 631–874 (IIGGKNSLRG…FVPWIKSVTK (244 aa)). His-676 (charge relay system) is an active-site residue. N-linked (GlcNAc...) asparagine glycosylation occurs at Asn-683. Catalysis depends on Asp-726, which acts as the Charge relay system. The active-site Charge relay system is Ser-825.

This sequence belongs to the peptidase S1 family.

It is found in the secreted. Functionally, plays a role in neuronal plasticity and the proteolytic action may subserve structural reorganizations associated with learning and memory operations. The sequence is that of Neurotrypsin (PRSS12) from Pan troglodytes (Chimpanzee).